A 604-amino-acid polypeptide reads, in one-letter code: Elongation factor 4 (604 aa).

The tr-type G domain maps to 7–189 (SRLRNFCIIA…AVVDRIPPPA (183 aa)). Residues 19–24 (DHGKST) and 136–139 (NKID) each bind GTP.

Belongs to the TRAFAC class translation factor GTPase superfamily. Classic translation factor GTPase family. LepA subfamily.

Its subcellular location is the cell inner membrane. The enzyme catalyses GTP + H2O = GDP + phosphate + H(+). In terms of biological role, required for accurate and efficient protein synthesis under certain stress conditions. May act as a fidelity factor of the translation reaction, by catalyzing a one-codon backward translocation of tRNAs on improperly translocated ribosomes. Back-translocation proceeds from a post-translocation (POST) complex to a pre-translocation (PRE) complex, thus giving elongation factor G a second chance to translocate the tRNAs correctly. Binds to ribosomes in a GTP-dependent manner. This Prochlorococcus marinus (strain MIT 9303) protein is Elongation factor 4.